Here is a 312-residue protein sequence, read N- to C-terminus: Pantothenate kinase (312 aa).

97 to 104 (GSVAVGKS) contributes to the ATP binding site.

Belongs to the prokaryotic pantothenate kinase family.

It localises to the cytoplasm. It carries out the reaction (R)-pantothenate + ATP = (R)-4'-phosphopantothenate + ADP + H(+). It participates in cofactor biosynthesis; coenzyme A biosynthesis; CoA from (R)-pantothenate: step 1/5. The polypeptide is Pantothenate kinase (Mycolicibacterium vanbaalenii (strain DSM 7251 / JCM 13017 / BCRC 16820 / KCTC 9966 / NRRL B-24157 / PYR-1) (Mycobacterium vanbaalenii)).